We begin with the raw amino-acid sequence, 490 residues long: UDP-N-acetylmuramate--L-alanine ligase (490 aa).

130–136 serves as a coordination point for ATP; it reads GTHGKTT.

Belongs to the MurCDEF family.

It is found in the cytoplasm. It catalyses the reaction UDP-N-acetyl-alpha-D-muramate + L-alanine + ATP = UDP-N-acetyl-alpha-D-muramoyl-L-alanine + ADP + phosphate + H(+). The protein operates within cell wall biogenesis; peptidoglycan biosynthesis. Functionally, cell wall formation. In Idiomarina loihiensis (strain ATCC BAA-735 / DSM 15497 / L2-TR), this protein is UDP-N-acetylmuramate--L-alanine ligase.